The chain runs to 279 residues: 3-methyl-2-oxobutanoate hydroxymethyltransferase (279 aa).

2 residues coordinate Mg(2+): Asp-44 and Asp-83. 3-methyl-2-oxobutanoate-binding positions include 44-45, Asp-83, and Lys-113; that span reads DS. A Mg(2+)-binding site is contributed by Glu-115. Catalysis depends on Glu-182, which acts as the Proton acceptor.

The protein belongs to the PanB family. As to quaternary structure, homodecamer; pentamer of dimers. Requires Mg(2+) as cofactor.

The protein localises to the cytoplasm. It carries out the reaction 3-methyl-2-oxobutanoate + (6R)-5,10-methylene-5,6,7,8-tetrahydrofolate + H2O = 2-dehydropantoate + (6S)-5,6,7,8-tetrahydrofolate. The protein operates within cofactor biosynthesis; (R)-pantothenate biosynthesis; (R)-pantoate from 3-methyl-2-oxobutanoate: step 1/2. Its function is as follows. Catalyzes the reversible reaction in which hydroxymethyl group from 5,10-methylenetetrahydrofolate is transferred onto alpha-ketoisovalerate to form ketopantoate. The chain is 3-methyl-2-oxobutanoate hydroxymethyltransferase from Dehalococcoides mccartyi (strain ATCC BAA-2100 / JCM 16839 / KCTC 5957 / BAV1).